A 299-amino-acid chain; its full sequence is Phosphatidylinositol-3-phosphatase (299 aa).

A signal peptide spans 1–43 (MLRGIQALSRPLTRVYRALAVIGVLAASLLASWVGAVPQVGLA).

As to quaternary structure, monomer. SapM interacts with host RAB7 via its C-terminus. It depends on a metal cation as a cofactor.

The protein localises to the secreted. Its subcellular location is the host cytoplasmic vesicle. The protein resides in the host phagosome. It carries out the reaction a phosphate monoester + H2O = an alcohol + phosphate. It catalyses the reaction a 1,2-diacyl-sn-glycero-3-phospho-(1D-myo-inositol-3-phosphate) + H2O = a 1,2-diacyl-sn-glycero-3-phospho-(1D-myo-inositol) + phosphate. With respect to regulation, phosphatase activity is inhibited in vitro by low concentrations of several heavy metals (zinc chloride, sodium molybdate, magnesium chloride, and copper sulfate) and moderately high concentrations (&gt;8 mM) of EDTA. Functionally, virulence factor that plays an important role in blocking phagosome-lysosome fusion and thus participates in the intracellular survival of the pathogen. Acts as a phosphatase that dephosphorylates phosphatidylinositol 3-phosphate (PI3P), a membrane trafficking regulatory lipid essential for phagosomal acquisition of lysosomal constituents. Therefore, SapM eliminates PI3P from the phagosomal membrane by catalyzing its hydrolysis, and thus contributes to inhibition of phagosome maturation. Also interferes with autophagy: SapM blocks autophagosome-lysosome fusion in macrophages by binding to the small GTPase RAB7, which prevents RAB7 from being involved in this process and thus negatively regulates autophagy flux. In vitro, displays phosphatase activity with broad specificity; can dephosphorylate a variety of phosphoester substrates, with the highest activity against phosphoenolpyruvate, glycerophosphate, GTP, NADPH, phosphotyrosine and trehalose-6-phosphate. In contrast, the enzyme exhibits poor activity against glucose-6-phosphate, phosphothreonine, and a number of nucleotides (NADP, ATP, AMP, and GMP). In Mycobacterium tuberculosis (strain ATCC 25618 / H37Rv), this protein is Phosphatidylinositol-3-phosphatase.